A 198-amino-acid chain; its full sequence is Carnitine operon protein CaiE (198 aa).

The tract at residues 179–198 is disordered; the sequence is VEENRPRLKGTTDVKPKSAQ. The span at 180–198 shows a compositional bias: basic and acidic residues; it reads EENRPRLKGTTDVKPKSAQ.

It belongs to the transferase hexapeptide repeat family.

It functions in the pathway amine and polyamine metabolism; carnitine metabolism. In terms of biological role, overproduction of CaiE stimulates the activity of CaiB and CaiD. This is Carnitine operon protein CaiE from Salmonella choleraesuis (strain SC-B67).